Consider the following 135-residue polypeptide: ATP synthase epsilon chain (135 aa).

This sequence belongs to the ATPase epsilon chain family. F-type ATPases have 2 components, CF(1) - the catalytic core - and CF(0) - the membrane proton channel. CF(1) has five subunits: alpha(3), beta(3), gamma(1), delta(1), epsilon(1). CF(0) has three main subunits: a, b and c.

The protein localises to the cell inner membrane. Functionally, produces ATP from ADP in the presence of a proton gradient across the membrane. This is ATP synthase epsilon chain from Desulforapulum autotrophicum (strain ATCC 43914 / DSM 3382 / VKM B-1955 / HRM2) (Desulfobacterium autotrophicum).